Reading from the N-terminus, the 77-residue chain is Large ribosomal subunit protein bL31 (77 aa).

Belongs to the bacterial ribosomal protein bL31 family. Type A subfamily. In terms of assembly, part of the 50S ribosomal subunit.

Its function is as follows. Binds the 23S rRNA. This is Large ribosomal subunit protein bL31 from Paramagnetospirillum magneticum (strain ATCC 700264 / AMB-1) (Magnetospirillum magneticum).